An 815-amino-acid chain; its full sequence is Phosphatidylinositol 4-phosphate 5-kinase 9 (815 aa).

MORN repeat units follow at residues 58 to 80, 81 to 103, 104 to 126, 127 to 149, 150 to 172, 173 to 195, 196 to 218, and 219 to 240; these read YSGS…DGCV, YDGE…SGAS, YDGE…NKLT, YKGR…NGDV, FEGS…NKNV, YLGD…TGDS, YEGS…DGGC, and YVGT…AGTR. One can recognise a PIPK domain in the interval 391–809; the sequence is GHRSYDLMLS…RFLEFIKKVF (419 aa). Residues 769-790 form an activation loop region; that stretch reads YNMTKKIEHAYKSLHFDSLSIS.

As to quaternary structure, interacts with CINV1. Widely expressed.

The protein resides in the membrane. It is found in the nucleus. It carries out the reaction a 1,2-diacyl-sn-glycero-3-phospho-(1D-myo-inositol 4-phosphate) + ATP = a 1,2-diacyl-sn-glycero-3-phospho-(1D-myo-inositol-4,5-bisphosphate) + ADP + H(+). Its function is as follows. Plays a role in sugar-mediated root development. Interaction with CINV1 induces repression of CINV1 activity and negative regulation of sugar-mediated root cell elongation. The chain is Phosphatidylinositol 4-phosphate 5-kinase 9 (PIP5K9) from Arabidopsis thaliana (Mouse-ear cress).